The primary structure comprises 92 residues: MALRHKSAQKRHRQSLKRRAINRAKKSTIKTFSKKALVAAQGGAEDATAMQQRAESLIDKAAKGSTLHKNAAARKKSRLAKAINKAKAAQQA.

Disordered regions lie at residues 1 to 25 (MALR…NRAK) and 68 to 92 (HKNA…AQQA). A compositionally biased stretch (low complexity) spans 80–92 (AKAINKAKAAQQA).

This sequence belongs to the bacterial ribosomal protein bS20 family.

Functionally, binds directly to 16S ribosomal RNA. The protein is Small ribosomal subunit protein bS20 of Deinococcus radiodurans (strain ATCC 13939 / DSM 20539 / JCM 16871 / CCUG 27074 / LMG 4051 / NBRC 15346 / NCIMB 9279 / VKM B-1422 / R1).